A 588-amino-acid chain; its full sequence is Adenine deaminase (588 aa).

It belongs to the metallo-dependent hydrolases superfamily. Adenine deaminase family. In terms of assembly, homodimer. It depends on Mn(2+) as a cofactor.

The enzyme catalyses adenine + H2O + H(+) = hypoxanthine + NH4(+). The protein is Adenine deaminase of Escherichia coli O9:H4 (strain HS).